The primary structure comprises 105 residues: UPF0145 protein jk0060 (105 aa).

It belongs to the UPF0145 family.

The polypeptide is UPF0145 protein jk0060 (Corynebacterium jeikeium (strain K411)).